A 77-amino-acid polypeptide reads, in one-letter code: DNA-directed RNA polymerase subunit epsilon (77 aa).

This sequence belongs to the RNA polymerase subunit epsilon family. As to quaternary structure, RNAP is composed of a core of 2 alpha, a beta and a beta' subunit. The core is associated with a delta subunit, and at least one of epsilon or omega. When a sigma factor is associated with the core the holoenzyme is formed, which can initiate transcription.

The catalysed reaction is RNA(n) + a ribonucleoside 5'-triphosphate = RNA(n+1) + diphosphate. A non-essential component of RNA polymerase (RNAP). The protein is DNA-directed RNA polymerase subunit epsilon of Lactobacillus delbrueckii subsp. bulgaricus (strain ATCC 11842 / DSM 20081 / BCRC 10696 / JCM 1002 / NBRC 13953 / NCIMB 11778 / NCTC 12712 / WDCM 00102 / Lb 14).